The chain runs to 252 residues: Short-chain dehydrogenase anuI (252 aa).

NADP(+) is bound by residues L18, D65, N92, Y171, K175, and T206. The active-site Proton acceptor is Y171. The active-site Proton donor is Y171. The Lowers pKa of active site Tyr role is filled by K175.

The protein belongs to the short-chain dehydrogenases/reductases (SDR) family.

Highly reducing polyketide synthase; part of the gene cluster that mediates the biosynthesis of annullatin D, an alkylated aromatic polyketide with a fused dihydrobenzofuran lactone ring system that exhibits potent agonistic activities toward the cannabinoid receptors. AnuI does not seem to play a role within the pathway. The annullatin backbone 2-hydroxymethyl-3-pentylphenol is assembled from one acetyl-CoA starter unit and 5 malonyl-CoA elongation units by cooperation of the highly reducing polyketide synthase anuA, the short-chain dehydrogenase anuB and the oxidoreductase anuC, before being hydroxylated at the C-5 alkyl chain by the cytochrome P450 monooxygenase anuE to form (8S)-annullatin E. The prenyltransferase anuH subsequently installs one isoprenyl group at the benzene ring to form (8S)-annullatin J. Enzymatic or nonenzymatic dihydro-benzofuran ring formation between the prenyl and the phenolic hydroxyl groups in (8S)-annullatin J results in two diastereomers (2S,9S)-annullatin H and compound 12. The intermediate (2S,9S)-annullatin H is then converted to (2S,9S)-annullatin D by the FAD-linked oxidoreductase anuG-catalyzed five-member lactone ring formation. The isomer 12 acts as a substrate for the short-chain dehydrogenase anuF and is oxidized to (2R)-annullatin F, which is subsequently acetylated by an acetyltransferase leading to (2R)-annullatin G formation. The remaining enzymes identified within the cluster, anuD, anuI and anuJ, seem not to be involved in annullatin biosynthesis. This chain is Short-chain dehydrogenase anuI, found in Penicillium roqueforti (strain FM164).